A 268-amino-acid polypeptide reads, in one-letter code: 3-deoxy-manno-octulosonate cytidylyltransferase (268 aa).

The protein belongs to the KdsB family.

The protein resides in the cytoplasm. It catalyses the reaction 3-deoxy-alpha-D-manno-oct-2-ulosonate + CTP = CMP-3-deoxy-beta-D-manno-octulosonate + diphosphate. The protein operates within nucleotide-sugar biosynthesis; CMP-3-deoxy-D-manno-octulosonate biosynthesis; CMP-3-deoxy-D-manno-octulosonate from 3-deoxy-D-manno-octulosonate and CTP: step 1/1. It functions in the pathway bacterial outer membrane biogenesis; lipopolysaccharide biosynthesis. Activates KDO (a required 8-carbon sugar) for incorporation into bacterial lipopolysaccharide in Gram-negative bacteria. The polypeptide is 3-deoxy-manno-octulosonate cytidylyltransferase (Psychrobacter arcticus (strain DSM 17307 / VKM B-2377 / 273-4)).